The chain runs to 172 residues: Peptide methionine sulfoxide reductase MsrA 1 (172 aa).

The active site involves Cys-14.

This sequence belongs to the MsrA Met sulfoxide reductase family.

The catalysed reaction is L-methionyl-[protein] + [thioredoxin]-disulfide + H2O = L-methionyl-(S)-S-oxide-[protein] + [thioredoxin]-dithiol. It carries out the reaction [thioredoxin]-disulfide + L-methionine + H2O = L-methionine (S)-S-oxide + [thioredoxin]-dithiol. In terms of biological role, has an important function as a repair enzyme for proteins that have been inactivated by oxidation. Catalyzes the reversible oxidation-reduction of methionine sulfoxide in proteins to methionine. This is Peptide methionine sulfoxide reductase MsrA 1 (msrA1) from Mesorhizobium japonicum (strain LMG 29417 / CECT 9101 / MAFF 303099) (Mesorhizobium loti (strain MAFF 303099)).